The primary structure comprises 209 residues: Thymidine kinase (209 aa).

ATP contacts are provided by residues 25-32 and 103-106; these read GCMFAGKT and DEVQ. E104 serves as the catalytic Proton acceptor. 4 residues coordinate Zn(2+): C160, C163, C198, and C201.

The protein belongs to the thymidine kinase family. In terms of assembly, homotetramer.

The protein resides in the cytoplasm. The enzyme catalyses thymidine + ATP = dTMP + ADP + H(+). The sequence is that of Thymidine kinase from Mycoplasma capricolum subsp. capricolum (strain California kid / ATCC 27343 / NCTC 10154).